We begin with the raw amino-acid sequence, 476 residues long: Neuropeptide receptor 18 (476 aa).

At 1–61 the chain is on the extracellular side; that stretch reads MSSFYNEAKF…LSNHDNSSLM (61 aa). N-linked (GlcNAc...) asparagine glycosylation is found at Asn43 and Asn57. Residues 62–82 form a helical membrane-spanning segment; that stretch reads LIAGFYALLFMFGTCGNAAIL. Residues 83–102 are Cytoplasmic-facing; the sequence is AVVHHVKGQDPRSRHNTTLT. Residues 103 to 123 traverse the membrane as a helical segment; sequence YICILSIVDFLSMLPIPMTII. At 124 to 139 the chain is on the extracellular side; it reads DQILGFWMFDTFACKL. Residues Cys137 and Cys228 are joined by a disulfide bond. A helical membrane pass occupies residues 140–160; sequence FRLLEHIGKIFSTFILVAFSI. Residues 161 to 179 are Cytoplasmic-facing; the sequence is DRYCAVCHPLQVRVRNQRT. The helical transmembrane segment at 180–200 threads the bilayer; that stretch reads VFVFLGIMFFVTCVMLSPILL. The Extracellular segment spans residues 201 to 236; the sequence is YAHSKELVMHEKVDLDQEVITRMHLYKCVDDLGREL. Residues 237-257 form a helical membrane-spanning segment; sequence FVVFTLYSFVLAYLMPLLFMI. Residues 258–291 lie on the Cytoplasmic side of the membrane; that stretch reads YFYYEMLIRLFKQANVIKQTLVGRRSGGEEKKLT. A helical transmembrane segment spans residues 292–312; that stretch reads IPVGHIAIYTLAICSFHFICW. The Extracellular portion of the chain corresponds to 313-334; that stretch reads TPYWISILYSLYEELYQDTKST. Residues 335–355 form a helical membrane-spanning segment; sequence ASPPTYAFIYFMYGVHALPYI. Residues 356–476 lie on the Cytoplasmic side of the membrane; sequence NSASNFILYG…ITPDTESVIL (121 aa).

This sequence belongs to the G-protein coupled receptor 1 family. Expressed in sensory neurons including ASER.

It is found in the cell membrane. Its function is as follows. Probable receptor for neuropeptide ligand nlp-9 that plays a role in octopamine signaling and specifically, the octapamine inhibition of aversion responses in olfactory sensory neurons. In AWB olfactory sensory neurons, required for the detection of preferred food sources. The polypeptide is Neuropeptide receptor 18 (Caenorhabditis elegans).